Reading from the N-terminus, the 312-residue chain is Ribosomal protein L11 methyltransferase (312 aa).

Residues Thr160, Gly181, Asp203, and Asn246 each contribute to the S-adenosyl-L-methionine site.

This sequence belongs to the methyltransferase superfamily. PrmA family.

It is found in the cytoplasm. The catalysed reaction is L-lysyl-[protein] + 3 S-adenosyl-L-methionine = N(6),N(6),N(6)-trimethyl-L-lysyl-[protein] + 3 S-adenosyl-L-homocysteine + 3 H(+). In terms of biological role, methylates ribosomal protein L11. In Staphylococcus aureus (strain MRSA252), this protein is Ribosomal protein L11 methyltransferase.